A 292-amino-acid chain; its full sequence is MNERYELNKNLAQMLKGGVIMDVTTPEQAVIAEKAGAVAVMALERVPADIRARGGVARMSDPKIIKEIKAAVSIPVMAKVRIGHFVEAQILEALGIDFIDESEVLTPADEMYHIDKWAFKIPFVCGARNLGEALRRIGEGASMIRTKGEAGTGNVVEAVRHMRIINAEIKRLTTLREDELMAAAKELQAPYELVKYVAQHGRLPVVNFAAGGIATPADAALMMQLGADGVFVGSGIFKSQNPEKMAEAIVKAVTYYDKPEILAEVSEGLGEAMQSIDIRKLDEKDLYASRGW.

D-ribose 5-phosphate is bound at residue D22. Residue K79 is the Schiff-base intermediate with D-ribose 5-phosphate of the active site. G151 is a D-ribose 5-phosphate binding site. R163 lines the D-glyceraldehyde 3-phosphate pocket. D-ribose 5-phosphate-binding positions include G212 and 233-234; that span reads GS.

Belongs to the PdxS/SNZ family. As to quaternary structure, in the presence of PdxT, forms a dodecamer of heterodimers.

It catalyses the reaction aldehydo-D-ribose 5-phosphate + D-glyceraldehyde 3-phosphate + L-glutamine = pyridoxal 5'-phosphate + L-glutamate + phosphate + 3 H2O + H(+). The protein operates within cofactor biosynthesis; pyridoxal 5'-phosphate biosynthesis. Functionally, catalyzes the formation of pyridoxal 5'-phosphate from ribose 5-phosphate (RBP), glyceraldehyde 3-phosphate (G3P) and ammonia. The ammonia is provided by the PdxT subunit. Can also use ribulose 5-phosphate and dihydroxyacetone phosphate as substrates, resulting from enzyme-catalyzed isomerization of RBP and G3P, respectively. This Thermoanaerobacter pseudethanolicus (strain ATCC 33223 / 39E) (Clostridium thermohydrosulfuricum) protein is Pyridoxal 5'-phosphate synthase subunit PdxS.